Consider the following 218-residue polypeptide: Small ribosomal subunit protein uS3 (218 aa).

Positions 2–71 (SAPQRRLPVY…IGRKGAIVKE (70 aa)) constitute a KH type-2 domain.

It belongs to the universal ribosomal protein uS3 family. As to quaternary structure, part of the 30S ribosomal subunit.

Functionally, binds the lower part of the 30S subunit head. This is Small ribosomal subunit protein uS3 from Pyrobaculum aerophilum (strain ATCC 51768 / DSM 7523 / JCM 9630 / CIP 104966 / NBRC 100827 / IM2).